The chain runs to 120 residues: MITKVDRNAVRKKRHARIRKKIFGTAERPRLSVFRSNKHIYAQIIDDVKSATIVSASTLDKEFSLDSTNNIDAAKKVGELVAKRALEKGIKQVVFDRGGYLYHGRVKALADAAREAGLEF.

Belongs to the universal ribosomal protein uL18 family. In terms of assembly, part of the 50S ribosomal subunit; part of the 5S rRNA/L5/L18/L25 subcomplex. Contacts the 5S and 23S rRNAs.

Its function is as follows. This is one of the proteins that bind and probably mediate the attachment of the 5S RNA into the large ribosomal subunit, where it forms part of the central protuberance. The sequence is that of Large ribosomal subunit protein uL18 from Geobacillus thermodenitrificans (strain NG80-2).